Here is a 493-residue protein sequence, read N- to C-terminus: Cytochrome P450 710A4 (493 aa).

Residues 5 to 25 form a helical membrane-spanning segment; the sequence is VSLFASLTPYLVSALLLFLLL. C435 is a binding site for heme.

This sequence belongs to the cytochrome P450 family. It depends on heme as a cofactor. In terms of tissue distribution, very weak expression in roots and root hairs. Not detected in the root tips.

Its subcellular location is the membrane. It catalyses the reaction 5-dehydroepisterol + NADPH + O2 + H(+) = ergosta-5,7,22,24(28)-tetraen-3beta-ol + NADP(+) + 2 H2O. It functions in the pathway steroid biosynthesis; sterol biosynthesis. Required to form the C-22 double bond in the sterol side chain. Possesses C-22 desaturase activity toward beta-sitosterol and produces stigmasterol. The sequence is that of Cytochrome P450 710A4 from Arabidopsis thaliana (Mouse-ear cress).